Here is a 342-residue protein sequence, read N- to C-terminus: Isopentenyl-diphosphate delta-isomerase (342 aa).

Position 11–12 (11–12 (RK)) interacts with substrate. FMN is bound by residues Ser68, 69 to 71 (SMT), Ser99, and Asn127. 99–101 (SMR) serves as a coordination point for substrate. Gln162 lines the substrate pocket. Glu163 is a binding site for Mg(2+). FMN is bound by residues Lys194, Thr224, 274 to 276 (GLK), and 295 to 296 (AG).

It belongs to the IPP isomerase type 2 family. As to quaternary structure, homooctamer. Dimer of tetramers. FMN is required as a cofactor. The cofactor is NADPH. Mg(2+) serves as cofactor.

It is found in the cytoplasm. It carries out the reaction isopentenyl diphosphate = dimethylallyl diphosphate. In terms of biological role, involved in the biosynthesis of isoprenoids. Catalyzes the 1,3-allylic rearrangement of the homoallylic substrate isopentenyl (IPP) to its allylic isomer, dimethylallyl diphosphate (DMAPP). This is Isopentenyl-diphosphate delta-isomerase from Rickettsia africae (strain ESF-5).